The chain runs to 1379 residues: Hepatocyte growth factor receptor (1379 aa).

The N-terminal stretch at 1 to 24 is a signal peptide; sequence MKAPTVLAPGILVLLLSLVQRSHG. The Extracellular segment spans residues 25–931; it reads ECKEALVKSE…VIVQPDQNFA (907 aa). The Sema domain maps to 27 to 514; it reads KEALVKSEMN…TGKKITKIPL (488 aa). An N-linked (GlcNAc...) asparagine glycan is attached at N45. 4 disulfide bridges follow: C95/C101, C98/C160, C133/C141, and C171/C174. A glycan (N-linked (GlcNAc...) asparagine) is linked at N106. N201 and N357 each carry an N-linked (GlcNAc...) asparagine glycan. Intrachain disulfides connect C297-C362 and C384-C396. Residues N398 and N404 are each glycosylated (N-linked (GlcNAc...) asparagine). 4 cysteine pairs are disulfide-bonded: C519–C537, C525–C560, C528–C544, and C540–C550. IPT/TIG domains are found at residues 562–654, 656–738, and 741–835; these read PAVY…FSYV, PVIT…FSYR, and PVVY…LTYV. Residue T581 is glycosylated (O-linked (Man) threonine). N-linked (GlcNAc...) asparagine glycosylation is found at N606 and N634. O-linked (Man) threonine glycans are attached at residues T675 and T760. 2 N-linked (GlcNAc...) asparagine glycosylation sites follow: N784 and N878. A helical transmembrane segment spans residues 932–954; it reads GLIIGAVSISVVVLLLSGLFLWM. Residues 955–1379 lie on the Cytoplasmic side of the membrane; the sequence is RKRKHKDLGS…QDNIDGEGNT (425 aa). S964 bears the Phosphoserine mark. At T975 the chain carries Phosphothreonine. A phosphoserine mark is found at S988, S995, and S998. Y1001 bears the Phosphotyrosine mark. A Protein kinase domain is found at 1076 to 1343; sequence VHFNEVIGRG…RISSIFSTFI (268 aa). ATP contacts are provided by residues 1082-1090 and K1108; that span reads IGRGHFGCV. Catalysis depends on D1202, which acts as the Proton acceptor. Residues 1210–1379 are interaction with RANBP9; sequence LDEKFTVKVA…QDNIDGEGNT (170 aa). Residue Y1228 is modified to Phosphotyrosine. Phosphotyrosine; by autocatalysis is present on residues Y1232 and Y1233. A Phosphothreonine modification is found at T1287. The interaction with MUC20 stretch occupies residues 1318–1357; that stretch reads WHPKAEMRPSFSELVSRISSIFSTFIGEHYVHVNATYVNV. Phosphotyrosine; by autocatalysis is present on residues Y1347 and Y1354. At Y1363 the chain carries Phosphotyrosine.

This sequence belongs to the protein kinase superfamily. Tyr protein kinase family. As to quaternary structure, heterodimer made of an alpha chain (50 kDa) and a beta chain (145 kDa) which are disulfide linked. Binds PLXNB1. Interacts when phosphorylated with downstream effectors including STAT3, PIK3R1, SRC, PCLG1, GRB2 and GAB1. When phosphorylated at Tyr-1354, interacts with INPPL1/SHIP2. Interacts with RANBP9 and RANBP10. Interacts with INPP5D/SHIP1. Interacts with SPSB1, SPSB2, SPSB4 and probably SPSB3. SPSB1 binding occurs in the presence and in the absence of HGF, however HGF treatment has a positive effect on this interaction. Interacts with MUC20; prevents interaction with GRB2 and suppresses hepatocyte growth factor-induced cell proliferation. Interacts with GRB10. Interacts with PTPN1 and PTPN2. Interacts with HSP90AA1 and HSP90AB1; the interaction suppresses MET kinase activity. Interacts with tensin TNS3. Interacts (when phosphorylated) with tensin TNS4 (via SH2 domain); the interaction increases MET protein stability by inhibiting MET endocytosis and subsequent lysosomal degradation. (Microbial infection) Interacts with L.monocytogenes InlB. InlB probably dimerizes upon binding to MET, which encourages subsequent dimerization of MET. Post-translationally, autophosphorylated in response to ligand binding on Tyr-1232 and Tyr-1233 in the kinase domain leading to further phosphorylation of Tyr-1347 and Tyr-1354 in the C-terminal multifunctional docking site. Dephosphorylated by PTPRJ at Tyr-1347 and Tyr-1363. Dephosphorylated by PTPN1 and PTPN2. Ubiquitinated. Ubiquitination by CBL regulates MET endocytosis, resulting in decreasing plasma membrane receptor abundance, and in endosomal degradation and/or recycling of internalized receptors. In terms of processing, O-mannosylation of IPT/TIG domains by TMEM260 is required for protein maturation. O-mannosylated residues are composed of single mannose glycans that are not elongated or modified. Post-translationally, (Microbial infection) Tyrosine phosphorylation is stimulated by L.monocytogenes InlB.

It localises to the membrane. The enzyme catalyses L-tyrosyl-[protein] + ATP = O-phospho-L-tyrosyl-[protein] + ADP + H(+). In its inactive state, the C-terminal tail interacts with the catalytic domain and inhibits the kinase activity. Upon ligand binding, the C-terminal tail is displaced and becomes phosphorylated, thus increasing the kinase activity. Its function is as follows. Receptor tyrosine kinase that transduces signals from the extracellular matrix into the cytoplasm by binding to hepatocyte growth factor/HGF ligand. Regulates many physiological processes including proliferation, scattering, morphogenesis and survival. Ligand binding at the cell surface induces autophosphorylation of MET on its intracellular domain that provides docking sites for downstream signaling molecules. Following activation by ligand, interacts with the PI3-kinase subunit PIK3R1, PLCG1, SRC, GRB2, STAT3 or the adapter GAB1. Recruitment of these downstream effectors by MET leads to the activation of several signaling cascades including the RAS-ERK, PI3 kinase-AKT, or PLCgamma-PKC. The RAS-ERK activation is associated with the morphogenetic effects while PI3K/AKT coordinates prosurvival effects. During embryonic development, MET signaling plays a role in gastrulation, development and migration of neuronal precursors, angiogenesis and kidney formation. During skeletal muscle development, it is crucial for the migration of muscle progenitor cells and for the proliferation of secondary myoblasts. In adults, participates in wound healing as well as organ regeneration and tissue remodeling. Also promotes differentiation and proliferation of hematopoietic cells. May regulate cortical bone osteogenesis. In terms of biological role, (Microbial infection) Acts as a receptor for Listeria monocytogenes internalin InlB, mediating entry of the pathogen into cells. In Mus musculus (Mouse), this protein is Hepatocyte growth factor receptor (Met).